A 719-amino-acid chain; its full sequence is Exonuclease mut-7 homolog (719 aa).

The disordered stretch occupies residues 1–22; the sequence is MSKSNNVAPPCRQDQLGFVPAG. The 55-residue stretch at 575–629 folds into the 3'-5' exonuclease domain; the sequence is NLANLVRLCLGKKLDKSNQFSNWAQRPLRKEQLRYAALDAFCLLEIYDAIEKQLT. A disordered region spans residues 644–719; it reads NDVRPPSDSG…FEGPNTKSVL (76 aa). A compositionally biased stretch (basic residues) spans 667–678; the sequence is RRNHRDKYNKRH. Polar residues-rich tracts occupy residues 683 to 692 and 706 to 719; these read DSNSGNSSRA and EQQTFEGPNTKSVL.

The protein belongs to the mut-7 family. Mg(2+) is required as a cofactor.

In terms of biological role, possesses 3'-5' exoribonuclease activity. Required for 3'-end trimming of AGO1-bound miRNAs. This chain is Exonuclease mut-7 homolog, found in Aedes aegypti (Yellowfever mosquito).